The following is a 354-amino-acid chain: UDP-N-acetylglucosamine--N-acetylmuramyl-(pentapeptide) pyrophosphoryl-undecaprenol N-acetylglucosamine transferase (354 aa).

Residues 11–13 (SAG), arginine 164, serine 194, and glutamine 289 contribute to the UDP-N-acetyl-alpha-D-glucosamine site.

Belongs to the glycosyltransferase 28 family. MurG subfamily.

The protein resides in the cell membrane. The enzyme catalyses di-trans,octa-cis-undecaprenyl diphospho-N-acetyl-alpha-D-muramoyl-L-alanyl-D-glutamyl-meso-2,6-diaminopimeloyl-D-alanyl-D-alanine + UDP-N-acetyl-alpha-D-glucosamine = di-trans,octa-cis-undecaprenyl diphospho-[N-acetyl-alpha-D-glucosaminyl-(1-&gt;4)]-N-acetyl-alpha-D-muramoyl-L-alanyl-D-glutamyl-meso-2,6-diaminopimeloyl-D-alanyl-D-alanine + UDP + H(+). The protein operates within cell wall biogenesis; peptidoglycan biosynthesis. Cell wall formation. Catalyzes the transfer of a GlcNAc subunit on undecaprenyl-pyrophosphoryl-MurNAc-pentapeptide (lipid intermediate I) to form undecaprenyl-pyrophosphoryl-MurNAc-(pentapeptide)GlcNAc (lipid intermediate II). The sequence is that of UDP-N-acetylglucosamine--N-acetylmuramyl-(pentapeptide) pyrophosphoryl-undecaprenol N-acetylglucosamine transferase from Shouchella clausii (strain KSM-K16) (Alkalihalobacillus clausii).